We begin with the raw amino-acid sequence, 201 residues long: Peptidyl-tRNA hydrolase (201 aa).

Y15 is a binding site for tRNA. The active-site Proton acceptor is the H20. 3 residues coordinate tRNA: Y66, N68, and N114.

Belongs to the PTH family. Monomer.

It is found in the cytoplasm. The enzyme catalyses an N-acyl-L-alpha-aminoacyl-tRNA + H2O = an N-acyl-L-amino acid + a tRNA + H(+). In terms of biological role, hydrolyzes ribosome-free peptidyl-tRNAs (with 1 or more amino acids incorporated), which drop off the ribosome during protein synthesis, or as a result of ribosome stalling. Catalyzes the release of premature peptidyl moieties from peptidyl-tRNA molecules trapped in stalled 50S ribosomal subunits, and thus maintains levels of free tRNAs and 50S ribosomes. This chain is Peptidyl-tRNA hydrolase, found in Burkholderia thailandensis (strain ATCC 700388 / DSM 13276 / CCUG 48851 / CIP 106301 / E264).